Here is a 384-residue protein sequence, read N- to C-terminus: Putative spore germination protein YfkR (384 aa).

Residues 1–20 (MKKTIYKCVLPLLICILLTG) form the signal peptide. A lipid anchor (N-palmitoyl cysteine) is attached at cysteine 21. Cysteine 21 carries S-diacylglycerol cysteine lipidation.

It belongs to the GerABKC lipoprotein family.

The protein resides in the cell membrane. Functionally, may be involved in spore germination. This is Putative spore germination protein YfkR (yfkR) from Bacillus subtilis (strain 168).